Reading from the N-terminus, the 340-residue chain is Geranylgeranyl pyrophosphate synthase atmG (340 aa).

Positions 19 to 48 are enriched in polar residues; that stretch reads NLDASYPTSSSLSTEPIDTRSSSPQGSAST. The interval 19–51 is disordered; that stretch reads NLDASYPTSSSLSTEPIDTRSSSPQGSASTPVD. Residues Lys-69, Arg-72, and His-101 each contribute to the isopentenyl diphosphate site. The Mg(2+) site is built by Asp-108 and Asp-112. Arg-117 is a dimethylallyl diphosphate binding site. Residue Arg-118 coordinates isopentenyl diphosphate. Dimethylallyl diphosphate contacts are provided by Lys-195, Thr-196, and Gln-229. A Mg(2+)-binding site is contributed by Asp-232. Residues Asn-236, Lys-246, and Lys-256 each coordinate dimethylallyl diphosphate.

Belongs to the FPP/GGPP synthase family. The cofactor is Mg(2+).

It carries out the reaction isopentenyl diphosphate + dimethylallyl diphosphate = (2E)-geranyl diphosphate + diphosphate. The enzyme catalyses isopentenyl diphosphate + (2E)-geranyl diphosphate = (2E,6E)-farnesyl diphosphate + diphosphate. The catalysed reaction is isopentenyl diphosphate + (2E,6E)-farnesyl diphosphate = (2E,6E,10E)-geranylgeranyl diphosphate + diphosphate. Its function is as follows. Geranylgeranyl pyrophosphate synthase; part of the ATM1 gene cluster that mediates the biosynthesis of aflatrem, a tremorgenic mycotoxin with acute neurotoxic effects. Synthesis of geranylgeranyl diphosphate (GGPP) by AtmG (a GGPP synthase) precedes condensation of GGPP with indole 3-glycerol phosphate, followed by epoxidation and cyclization by AtmM (a FAD-dependent monooxygenase) and AtmC (a prenyltransferase) to produce paspaline. AtmB is also essential for paspaline production, but its exact role has not been identified yet. AtmP, a cytochrome P450 monooxygenase, subsequently converts paspaline to 13-desoxypaxilline via PC-M6 by removal of the C-30 methyl group and oxidation at C-10. AtmQ, a cytochrome P450 monooxygenase, then catalyzes the oxidation of 13-desoxypaxilline, first at C-7 to produce paspalicine and then at C-13 to form paspalinine. Finally, AtmD prenylates paspalinine to form aflatrem. This Aspergillus flavus protein is Geranylgeranyl pyrophosphate synthase atmG.